We begin with the raw amino-acid sequence, 254 residues long: Methyl-CpG-binding domain-containing protein 11 (254 aa).

Positions 4 to 74 (EEEVVSVELP…AEFDWTTSGT (71 aa)) constitute an MBD domain. Residues 56–254 (KSHPGNPAIA…EKTAEGEATG (199 aa)) are disordered. Basic and acidic residues-rich tracts occupy residues 80-97 (RISE…EPPK), 107-130 (SKKD…KDTE), 151-162 (ETERVNDAKENI), and 178-254 (ESMK…EATG). S116 is subject to Phosphoserine.

Expressed in leaves (around hydathodes), buds, flowers (carpels and pollen grains), stems (around nodes), siliques, mature seeds and roots.

It localises to the nucleus. In terms of biological role, transcriptional regulator that binds DNA independently of its methylation status. Required during plant organogenesis and development. The protein is Methyl-CpG-binding domain-containing protein 11 (MBD11) of Arabidopsis thaliana (Mouse-ear cress).